The following is a 131-amino-acid chain: Transcription antitermination protein NusB (131 aa).

This sequence belongs to the NusB family.

Its function is as follows. Involved in transcription antitermination. Required for transcription of ribosomal RNA (rRNA) genes. Binds specifically to the boxA antiterminator sequence of the ribosomal RNA (rrn) operons. The polypeptide is Transcription antitermination protein NusB (Bacillus pumilus (strain SAFR-032)).